The following is a 210-amino-acid chain: Glutathione S-transferase P (210 aa).

The GST N-terminal domain occupies 2-81 (PPYTVVYFPV…HLGRTLGLYG (80 aa)). Tyrosine 4 bears the Phosphotyrosine; by EGFR mark. Glutathione contacts are provided by residues tyrosine 8, arginine 14, tryptophan 39, lysine 45, and 52-53 (QL). Threonine 62 bears the Phosphothreonine mark. 65–66 (QS) provides a ligand contact to glutathione. Residues 83–204 (DQQEAALVDM…ASPEYVNLPI (122 aa)) form the GST C-terminal domain. Lysine 103 and lysine 116 each carry N6-succinyllysine. An N6-acetyllysine modification is found at lysine 128. A Phosphotyrosine; by EGFR modification is found at tyrosine 199.

Belongs to the GST superfamily. Pi family. As to quaternary structure, homodimer. Interacts with CDK5.

It localises to the cytoplasm. It is found in the mitochondrion. Its subcellular location is the nucleus. It carries out the reaction RX + glutathione = an S-substituted glutathione + a halide anion + H(+). It catalyses the reaction prostaglandin J2 + glutathione = prostaglandin J2-S-(R)-glutathione. The enzyme catalyses prostaglandin J2 + glutathione = prostaglandin J2-S-(S)-glutathione. The catalysed reaction is prostaglandin A2 + glutathione = prostaglandin A2-S-(S)-glutathione. It carries out the reaction 11(S)-hydroxy-14(S),15(S)-epoxy-(5Z,8Z,12E)-eicosatrienoate + glutathione = (11S,15S)-dihydroxy-14(R)-S-glutathionyl-(5Z,8Z,12E)-eicosatrienoate. Conjugation of reduced glutathione to a wide number of exogenous and endogenous hydrophobic electrophiles. Involved in the formation of glutathione conjugates of both prostaglandin A2 (PGA2) and prostaglandin J2 (PGJ2). Participates in the formation of novel hepoxilin regioisomers. Negatively regulates CDK5 activity via p25/p35 translocation to prevent neurodegeneration. In Homo sapiens (Human), this protein is Glutathione S-transferase P.